The following is a 255-amino-acid chain: 6-phosphogluconolactonase 4 (255 aa).

Belongs to the glucosamine/galactosamine-6-phosphate isomerase family. 6-phosphogluconolactonase subfamily.

It localises to the cytoplasm. It catalyses the reaction 6-phospho-D-glucono-1,5-lactone + H2O = 6-phospho-D-gluconate + H(+). It participates in carbohydrate degradation; pentose phosphate pathway; D-ribulose 5-phosphate from D-glucose 6-phosphate (oxidative stage): step 2/3. Functionally, involved in the pentose phosphate pathway via hydrolysis of 6-phosphogluconolactone to 6-phosphogluconate. The polypeptide is 6-phosphogluconolactonase 4 (Saccharomyces cerevisiae (strain ATCC 204508 / S288c) (Baker's yeast)).